Reading from the N-terminus, the 276-residue chain is Probable ABC transporter permease protein PH1036 (276 aa).

6 consecutive transmembrane segments (helical) span residues 12–32 (IAWSIGIAWLIPFMGVLMASV), 75–95 (IVAIPSTIVPVIVASLAAYAF), 109–129 (FIVLLMALPQQMTVVPLYFLL), 137–157 (TFRGLIIVHSAWGLAWIIFFM), 186–206 (IVLPMALPGLISASILQFTWV), and 241–261 (GLLTAASIMVMLVPLLVYALF). The region spanning 70 to 261 (LKNSLIVAIP…LVPLLVYALF (192 aa)) is the ABC transmembrane type-1 domain.

It belongs to the binding-protein-dependent transport system permease family. MalFG subfamily.

It localises to the cell membrane. Functionally, probably part of a binding-protein-dependent transport system PH1036/38/39. Probably responsible for the translocation of the substrate across the membrane. The chain is Probable ABC transporter permease protein PH1036 from Pyrococcus horikoshii (strain ATCC 700860 / DSM 12428 / JCM 9974 / NBRC 100139 / OT-3).